Consider the following 478-residue polypeptide: Adenosylhomocysteinase (478 aa).

Residues Thr-67, Asp-144, and Glu-204 each coordinate substrate. NAD(+) is bound at residue Thr-205–Thr-207. Substrate is bound by residues Lys-234 and Asp-238. Residues Asn-239, Gly-268 to Gly-273, Glu-291, Asn-326, Ile-347 to His-349, and Asn-392 each bind NAD(+).

The protein belongs to the adenosylhomocysteinase family. It depends on NAD(+) as a cofactor.

The protein localises to the cytoplasm. It catalyses the reaction S-adenosyl-L-homocysteine + H2O = L-homocysteine + adenosine. It functions in the pathway amino-acid biosynthesis; L-homocysteine biosynthesis; L-homocysteine from S-adenosyl-L-homocysteine: step 1/1. Functionally, may play a key role in the regulation of the intracellular concentration of adenosylhomocysteine. The chain is Adenosylhomocysteinase from Nitrosomonas eutropha (strain DSM 101675 / C91 / Nm57).